Reading from the N-terminus, the 483-residue chain is Chromatin structure-remodeling complex protein RSC6 (483 aa).

2 disordered regions span residues lysine 142 to serine 183 and alanine 273 to glutamate 309. Residues serine 148 to proline 158 show a composition bias toward low complexity. The segment covering aspartate 171–glutamate 180 has biased composition (acidic residues).

The protein to yeast SNF12. Interacts directly with RSC8. Component of the two forms of the RSC complex composed of at least either RSC1 or RSC2, and ARP7, ARP9, LDB7, NPL6, RSC3, RSC30, RSC4, RSC58, RSC6, RSC8, RSC9, SFH1, STH1, HTL1 and probably RTT102. The complexes interact with histone and histone variant components of centromeric chromatin.

Its subcellular location is the nucleus. In terms of biological role, component of the chromatin structure-remodeling complex (RSC), which is involved in transcription regulation and nucleosome positioning. RSC is responsible for the transfer of a histone octamer from a nucleosome core particle to naked DNA. The reaction requires ATP and involves an activated RSC-nucleosome intermediate. Remodeling reaction also involves DNA translocation, DNA twist and conformational change. As a reconfigurer of centromeric and flanking nucleosomes, RSC complex is required both for proper kinetochore function in chromosome segregation and, via a PKC1-dependent signaling pathway, for organization of the cellular cytoskeleton. This subunit is essential for mitotic growth and suppresses formamide sensitivity of the RSC8 mutants. The protein is Chromatin structure-remodeling complex protein RSC6 (RSC6) of Saccharomyces cerevisiae (strain ATCC 204508 / S288c) (Baker's yeast).